A 376-amino-acid chain; its full sequence is uncharacterized protein (376 aa).

Over 1 to 280 the chain is Lumenal; sequence MPIPIIAHIA…RTPGFRRVVS (280 aa). Residues Ile-66, Asp-115, Arg-178, Lys-233, Val-270, and Thr-272 each contribute to the NADP(+) site. Lys-233 functions as the Lowers pKa of active site Tyr in the catalytic mechanism. The chain crosses the membrane as a helical span at residues 281 to 301; that stretch reads FGKVWGLFLYLLLWPFWWLLL. Residues 302–376 lie on the Cytoplasmic side of the membrane; it reads KGTIHGAQSF…KKKKIKKSKK (75 aa).

Belongs to the short-chain dehydrogenases/reductases (SDR) family.

It is found in the cytoplasm. Its subcellular location is the endoplasmic reticulum membrane. Functionally, may be involved in lipid metabolism. This is an uncharacterized protein from Schizosaccharomyces pombe (strain 972 / ATCC 24843) (Fission yeast).